The sequence spans 346 residues: Growth hormone-inducible transmembrane protein (346 aa).

Residues 1–45 (MLAARLVCLRTLPSRVFQPTFITKASPLVKNSITKNQWLLTPSRE) constitute a mitochondrion transit peptide. Over 46–83 (YATKTRIRTHRGKTGQELKEAALEPSLEKVFKIDQMGK) the chain is Mitochondrial matrix. A helical transmembrane segment spans residues 84-104 (WFVAGGAAVGLGALCYYGLGM). The Mitochondrial intermembrane segment spans residues 105 to 126 (SNEIGAIEKAVIWPQYVKDRIH). Residues 127 to 147 (STYMYLAGSIGLTALSALALA) traverse the membrane as a helical segment. Topologically, residues 148 to 160 (RSPALMNFMMTGS) are mitochondrial matrix. The helical transmembrane segment at 161-181 (WMTIGATFAAMIGAGMLVQSI) threads the bilayer. Residues 182-191 (SYEQSPGPKH) lie on the Mitochondrial intermembrane side of the membrane. Residues 192–212 (LAWMLHSGVMGAVVAPLTILG) form a helical membrane-spanning segment. The Mitochondrial matrix portion of the chain corresponds to 213-214 (GP). Residues 215 to 235 (LLLRAAWYTAGIVGGLSTVAM) traverse the membrane as a helical segment. Over 236-245 (CAPSEKFLNM) the chain is Mitochondrial intermembrane. The chain crosses the membrane as a helical span at residues 246-266 (GAPLGVGLGLVFASSLGSMFL). The Mitochondrial matrix portion of the chain corresponds to 267–272 (PPTSVA). A helical transmembrane segment spans residues 273 to 293 (GATLYSVAMYGGLVLFSMFLL). The Mitochondrial intermembrane segment spans residues 294 to 346 (YDTQKVVKRAEITPAYGAQKYDPINSMLTIYMDTLNIFMRVATMLATGSNRKK).

This sequence belongs to the BI1 family. Interacts with LETM1 and AFG3L2. Undergoes AFG3L2-mediated proteolytic degradation, upon hyperpolarization of mitochondria.

Its subcellular location is the mitochondrion inner membrane. Its function is as follows. Plays an important role in maintenance of mitochondrial morphology and in mediating either calcium or potassium/proton antiport. Mediates proton-dependent calcium efflux from mitochondrion. Also functions as an electroneutral mitochondrial proton/potassium exchanger. Required for the mitochondrial tubular network and cristae organization. Involved in apoptotic release of cytochrome c. Inhibits AFG3L2 proteolytic activity, stimulating respiration and stabilizing respiratory enzymes in actively respiring mitochondria. However, when mitochondria become hyperpolarized, GHITM loses its inhibitory activity toward AFG3L2 and the now active AFG3L2 turns first on GHITM and, if hyperpolarization persists, on other proteins of the mitochondria, leading to a broad remodeling of the proteome. The chain is Growth hormone-inducible transmembrane protein (Ghitm) from Rattus norvegicus (Rat).